The primary structure comprises 353 residues: Pupal cuticle protein PCP52 (353 aa).

A signal peptide spans 1 to 15; it reads MRVLILSAFIACATA. The interval 166–195 is disordered; sequence AEAPEGNKDEGNKDSVQVESSATESESDKA. Polar residues predominate over residues 179–189; it reads DSVQVESSATE.

Component of the cuticle of the pupa of Galleria mellonella. The protein is Pupal cuticle protein PCP52 (PCP52) of Galleria mellonella (Greater wax moth).